Reading from the N-terminus, the 336-residue chain is Glucan endo-1,3-beta-glucosidase A (336 aa).

Residues 1–23 (MAFLSSLLASLLLVGLLIQITGA) form the signal peptide. Position 24 is a pyrrolidone carboxylic acid (glutamine 24). The Proton donor role is filled by glutamate 118. Residue glutamate 257 is the Nucleophile of the active site.

It belongs to the glycosyl hydrolase 17 family.

Its subcellular location is the secreted. The protein localises to the extracellular space. The catalysed reaction is Hydrolysis of (1-&gt;3)-beta-D-glucosidic linkages in (1-&gt;3)-beta-D-glucans.. Its function is as follows. Implicated in the defense of plants against pathogens. The chain is Glucan endo-1,3-beta-glucosidase A from Solanum lycopersicum (Tomato).